Here is a 152-residue protein sequence, read N- to C-terminus: Antiholin-like protein LrgA (152 aa).

4 helical membrane-spanning segments follow: residues 23–43, 45–65, 77–97, and 108–128; these read YSIFQQALTIAVILLISKIIE, FMPIPMPASVIGLVLLFIALC, VGTALTNNIGFLFVPAGISVI, and ILIILLIIISTLLLLICTGFA.

The protein belongs to the CidA/LrgA family. LrgA subfamily.

It localises to the cell membrane. Its function is as follows. Inhibits the expression or activity of extracellular murein hydrolases by interacting, possibly with LrgB, with the holin-like proteins CidA and/or CidB. The LrgAB and CidAB proteins may affect the proton motive force of the membrane. May be involved in programmed cell death (PCD), possibly triggering PCD in response to antibiotics and environmental stresses. The chain is Antiholin-like protein LrgA from Staphylococcus epidermidis (strain ATCC 35984 / DSM 28319 / BCRC 17069 / CCUG 31568 / BM 3577 / RP62A).